The primary structure comprises 158 residues: 2-C-methyl-D-erythritol 2,4-cyclodiphosphate synthase (158 aa).

2 residues coordinate a divalent metal cation: aspartate 9 and histidine 11. Residues 9 to 11 (DVH) and 35 to 36 (HS) each bind 4-CDP-2-C-methyl-D-erythritol 2-phosphate. An a divalent metal cation-binding site is contributed by histidine 43. Residues 57–59 (DIG), 62–66 (FPDTD), 101–107 (AQKPKMA), 133–136 (TTTE), phenylalanine 140, and arginine 143 contribute to the 4-CDP-2-C-methyl-D-erythritol 2-phosphate site.

The protein belongs to the IspF family. In terms of assembly, homotrimer. A divalent metal cation is required as a cofactor.

It carries out the reaction 4-CDP-2-C-methyl-D-erythritol 2-phosphate = 2-C-methyl-D-erythritol 2,4-cyclic diphosphate + CMP. The protein operates within isoprenoid biosynthesis; isopentenyl diphosphate biosynthesis via DXP pathway; isopentenyl diphosphate from 1-deoxy-D-xylulose 5-phosphate: step 4/6. Involved in the biosynthesis of isopentenyl diphosphate (IPP) and dimethylallyl diphosphate (DMAPP), two major building blocks of isoprenoid compounds. Catalyzes the conversion of 4-diphosphocytidyl-2-C-methyl-D-erythritol 2-phosphate (CDP-ME2P) to 2-C-methyl-D-erythritol 2,4-cyclodiphosphate (ME-CPP) with a corresponding release of cytidine 5-monophosphate (CMP). The chain is 2-C-methyl-D-erythritol 2,4-cyclodiphosphate synthase from Bacillus cytotoxicus (strain DSM 22905 / CIP 110041 / 391-98 / NVH 391-98).